Here is a 669-residue protein sequence, read N- to C-terminus: MSKEIAKKRIEELRDLLNTFNYQYHVLDNPSVSDAEYDRDMQELIKLEAENPEFMSEDSPSIRVGGTVLDIFEKVTHKSPMLSLGNAFNEGDLRDFDRRVHQGIDDANVRYICELKIDGLAVSLHYEKGRFIQGATRGDGITGEDITQNLKTIKAIPLRLNEEVTLEARGEAYMPKRSFVKLNEEKEQNGEDVFANPRNAAAGSIRQLDPKIAAKRNLSMFVYGLANVEEKTIPSHSESLDFLGELGFKTNPNRRTCETIEDVIAYVEEWQEKRPHLDYEIDGIVIKVDDVAIQESLGTTAKSPRWAIAYKFPAEEVVTRLTGIELSVGRTGVVTPTAELEPVRVAGTIVRRASLHNEDLIREKDIRIGDYVVVKKAGDIIPEVVNVIFDKRTGEEEEYHMPTHCPACESELVRLEEEVALRCINPTCPAQIREGLIHFVSRNAMNIDGLGERVITQLFDADYIRTFADLYSLTKEQLLELERFGEKSATNLVQAIENSKENSLERLLFGLGIRHVGAKAARTFAEHFETMDELVKATEEELKTINEIGEKMAQSVVTYFDNEDVLELLQQFKEYGVNMAYKGIKIADLQNVESYFAGKTVVLTGKLEVMGRSEAKKKIEALGGKVTGSVSKSTDLLVAGEAAGSKLAQAEKHNVEVWNEERFLQELNK.

NAD(+) is bound by residues 34–38 (DAEYD), 83–84 (SL), and glutamate 114. Lysine 116 functions as the N6-AMP-lysine intermediate in the catalytic mechanism. Residues arginine 137, glutamate 171, lysine 287, and lysine 311 each contribute to the NAD(+) site. Residues cysteine 405, cysteine 408, cysteine 423, and cysteine 428 each contribute to the Zn(2+) site. Positions 591–669 (NVESYFAGKT…EERFLQELNK (79 aa)) constitute a BRCT domain.

It belongs to the NAD-dependent DNA ligase family. LigA subfamily. The cofactor is Mg(2+). Mn(2+) is required as a cofactor.

The catalysed reaction is NAD(+) + (deoxyribonucleotide)n-3'-hydroxyl + 5'-phospho-(deoxyribonucleotide)m = (deoxyribonucleotide)n+m + AMP + beta-nicotinamide D-nucleotide.. Functionally, DNA ligase that catalyzes the formation of phosphodiester linkages between 5'-phosphoryl and 3'-hydroxyl groups in double-stranded DNA using NAD as a coenzyme and as the energy source for the reaction. It is essential for DNA replication and repair of damaged DNA. The protein is DNA ligase of Bacillus mycoides (strain KBAB4) (Bacillus weihenstephanensis).